A 505-amino-acid chain; its full sequence is Catalase (505 aa).

The tract at residues 1 to 25 (MSQQDKKLTGVFGHPVSDRENSMTA) is disordered. Catalysis depends on residues H56 and N129. Residue Y339 participates in heme binding.

It belongs to the catalase family. Homodimer. Heme is required as a cofactor.

It catalyses the reaction 2 H2O2 = O2 + 2 H2O. Functionally, decomposes hydrogen peroxide into water and oxygen; serves to protect cells from the toxic effects of hydrogen peroxide. The protein is Catalase (katA) of Staphylococcus aureus.